The primary structure comprises 598 residues: MKNIRNFSIIAHIDHGKSTLSDRIIQICGGLTDREMAAQVLDSMDLERERGITIKAQSVTLNYTADDGEVYQLNFIDTPGHVDFSYEVSRSLAACEGALLVVDAGQGVEAQTLANCYTAIDMDLTVVPVLNKIDLPAAEPERVAEEIEDIVGIDATDAVRCSAKTGVGVKEVIERLVKEIPAPEGDPDAPLQALIIDSWFDNYLGVVSLIRIKNGKVNKGDKIKVMSTGQVYNIDRIGIFTPKQVDTTSLSCGEVGWVVCGIKDILGAPVGDTLTAAQKPADKPLPGFKKVKPQVYAGLFPVSSDDYESFRDALGKLSLNDASLFYEPESSSALGFGFRCGFLGLLHMEIIQERLEREYDLDLITTAPTVVYEVEMTNGDIIMVDSPSKLPALNNIEEIREPIAECHMLLPQEYLGNVITLCVEKRGVQTNMVYHGNQVSLTYEIPMAEVVLDFFDRLKSTSRGYASLDYNFLRFQGSNMVRVDVLINGERVDALALITHNDNAPYRGRELVEKMKEFIPRQQFDIAIQAAIGNHIIARSTVKQLRKNVLAKCYGGDVSRKKKLLQKQKEGKKRMKQIGNVELPQEAFLAILHVGKDK.

The tr-type G domain occupies 2 to 184; sequence KNIRNFSIIA…RLVKEIPAPE (183 aa). Residues 14–19 and 131–134 contribute to the GTP site; these read DHGKST and NKID.

This sequence belongs to the TRAFAC class translation factor GTPase superfamily. Classic translation factor GTPase family. LepA subfamily.

It is found in the cell inner membrane. The catalysed reaction is GTP + H2O = GDP + phosphate + H(+). In terms of biological role, required for accurate and efficient protein synthesis under certain stress conditions. May act as a fidelity factor of the translation reaction, by catalyzing a one-codon backward translocation of tRNAs on improperly translocated ribosomes. Back-translocation proceeds from a post-translocation (POST) complex to a pre-translocation (PRE) complex, thus giving elongation factor G a second chance to translocate the tRNAs correctly. Binds to ribosomes in a GTP-dependent manner. The chain is Elongation factor 4 from Proteus mirabilis (strain HI4320).